The primary structure comprises 172 residues: Conglutin-7 (172 aa).

The signal sequence occupies residues 1–21 (MAKLTILVALALFLLAAHASA). 4 cysteine pairs are disulfide-bonded: Cys-33/Cys-116, Cys-45/Cys-103, Cys-104/Cys-152, and Cys-118/Cys-160. A disordered region spans residues 54-98 (QRDEDSYGRDPYSPSQDPYSPSQDPDRRDPYSPSPYDRRGAGSSQ). A compositionally biased stretch (low complexity) spans 62 to 76 (RDPYSPSQDPYSPSQ). 4-hydroxyproline is present on residues Pro-67, Pro-74, and Pro-86. A compositionally biased stretch (basic and acidic residues) spans 77–98 (DPDRRDPYSPSPYDRRGAGSSQ).

Belongs to the 2S seed storage albumins family. In terms of processing, the hydroxyproline modifications determined by mass spectrometry are probably 4-hydroxyproline as determined for other extracellular plant proteins. Expressed in seeds, not expressed in leaves, roots and pegs.

Weak inhibitor of trypsin. The sequence is that of Conglutin-7 from Arachis hypogaea (Peanut).